The primary structure comprises 900 residues: Periodic tryptophan protein 2 (900 aa).

5 WD repeats span residues 10–47 (GAPY…SVTL), 50–89 (ETST…VLHR), 91–129 (TFKD…RAVL), 139–178 (NSDD…GVLN), and 185–229 (GHRD…VKMD). A disordered region spans residues 228-284 (MDESEDGHSEPPSPVTPDRADEVMVENGGGVGTELKKRKEYDGKGLESDEEGDDDDE). The span at 261–274 (ELKKRKEYDGKGLE) shows a compositional bias: basic and acidic residues. Position 275 is a phosphoserine (S275). Over residues 275-284 (SDEEGDDDDE) the composition is skewed to acidic residues. WD repeat units lie at residues 302 to 341 (QASA…CIHL), 344 to 384 (ISRQ…YILK), 387 to 426 (GHYF…CFIT), 429 to 468 (EHTN…NYKT), 472 to 512 (PTPR…IKDI), 515 to 554 (GHEA…GTVE), 557 to 596 (RHNH…LMYT), and 619 to 658 (SSGK…LLRR). The interval 684-720 (PIDLIDDDNSDEEGGIDKQSRGNLGYDLPGSRPNRGR) is disordered. A compositionally biased stretch (acidic residues) spans 687–697 (LIDDDNSDEEG). A WD 14 repeat occupies 720–759 (RPIIRTKSLSIAPTGRSFAAATTEGVLIFSIDDTFIFDPT).

The protein belongs to the WD repeat PWP2 family. As to quaternary structure, component of the ribosomal small subunit (SSU) processome. Interacts with TBP1 in the nucleus. In terms of tissue distribution, expressed constitutively and ubiquitously; observed in seeds, seedlings, roots, leaves, stems, flowers and siliques.

Its subcellular location is the nucleus. The protein resides in the nucleolus. In terms of biological role, involved in nucleolar processing of pre-18S ribosomal RNA. Plays a role early in ribosome biogenesis, especially in the maturation of 5.8S rRNA. Required for guard cell functions. This is Periodic tryptophan protein 2 from Arabidopsis thaliana (Mouse-ear cress).